A 597-amino-acid chain; its full sequence is Elongation factor 4 (597 aa).

A tr-type G domain is found at 2 to 184 (KHIRNFSIIA…NIVSAIPAPE (183 aa)). GTP-binding positions include 14–19 (DHGKST) and 131–134 (NKID).

It belongs to the TRAFAC class translation factor GTPase superfamily. Classic translation factor GTPase family. LepA subfamily.

The protein resides in the cell inner membrane. The catalysed reaction is GTP + H2O = GDP + phosphate + H(+). Required for accurate and efficient protein synthesis under certain stress conditions. May act as a fidelity factor of the translation reaction, by catalyzing a one-codon backward translocation of tRNAs on improperly translocated ribosomes. Back-translocation proceeds from a post-translocation (POST) complex to a pre-translocation (PRE) complex, thus giving elongation factor G a second chance to translocate the tRNAs correctly. Binds to ribosomes in a GTP-dependent manner. In Vibrio parahaemolyticus serotype O3:K6 (strain RIMD 2210633), this protein is Elongation factor 4.